The primary structure comprises 258 residues: Triosephosphate isomerase (258 aa).

Asn-11–Lys-13 is a substrate binding site. The active-site Electrophile is the His-101. Glu-173 serves as the catalytic Proton acceptor. Substrate contacts are provided by residues Gly-179, Ser-219, and Gly-240–Gly-241.

This sequence belongs to the triosephosphate isomerase family. In terms of assembly, homodimer.

The protein localises to the cytoplasm. The catalysed reaction is D-glyceraldehyde 3-phosphate = dihydroxyacetone phosphate. Its pathway is carbohydrate biosynthesis; gluconeogenesis. It participates in carbohydrate degradation; glycolysis; D-glyceraldehyde 3-phosphate from glycerone phosphate: step 1/1. Its function is as follows. Involved in the gluconeogenesis. Catalyzes stereospecifically the conversion of dihydroxyacetone phosphate (DHAP) to D-glyceraldehyde-3-phosphate (G3P). The polypeptide is Triosephosphate isomerase (Streptomyces avermitilis (strain ATCC 31267 / DSM 46492 / JCM 5070 / NBRC 14893 / NCIMB 12804 / NRRL 8165 / MA-4680)).